Here is a 182-residue protein sequence, read N- to C-terminus: ATP synthase subunit delta (182 aa).

This sequence belongs to the ATPase delta chain family. As to quaternary structure, F-type ATPases have 2 components, F(1) - the catalytic core - and F(0) - the membrane proton channel. F(1) has five subunits: alpha(3), beta(3), gamma(1), delta(1), epsilon(1). CF(0) has four main subunits: a(1), b(1), b'(1) and c(10-14). The alpha and beta chains form an alternating ring which encloses part of the gamma chain. F(1) is attached to F(0) by a central stalk formed by the gamma and epsilon chains, while a peripheral stalk is formed by the delta, b and b' chains.

It is found in the cellular thylakoid membrane. Its function is as follows. F(1)F(0) ATP synthase produces ATP from ADP in the presence of a proton or sodium gradient. F-type ATPases consist of two structural domains, F(1) containing the extramembraneous catalytic core and F(0) containing the membrane proton channel, linked together by a central stalk and a peripheral stalk. During catalysis, ATP synthesis in the catalytic domain of F(1) is coupled via a rotary mechanism of the central stalk subunits to proton translocation. In terms of biological role, this protein is part of the stalk that links CF(0) to CF(1). It either transmits conformational changes from CF(0) to CF(1) or is implicated in proton conduction. This chain is ATP synthase subunit delta, found in Synechococcus sp. (strain CC9902).